The chain runs to 186 residues: Probable chorismate pyruvate-lyase (186 aa).

The substrate site is built by Arg-77, Leu-115, and Glu-174.

Belongs to the UbiC family.

It is found in the cytoplasm. It catalyses the reaction chorismate = 4-hydroxybenzoate + pyruvate. The protein operates within cofactor biosynthesis; ubiquinone biosynthesis. Functionally, removes the pyruvyl group from chorismate, with concomitant aromatization of the ring, to provide 4-hydroxybenzoate (4HB) for the ubiquinone pathway. This Shewanella sp. (strain W3-18-1) protein is Probable chorismate pyruvate-lyase.